Consider the following 496-residue polypeptide: Cytochrome P450 monooxygenase ausR (496 aa).

Residues 12–32 (IGLYILWTIPVLFVIFKLLAP) form a helical membrane-spanning segment. Cysteine 435 lines the heme pocket.

Belongs to the cytochrome P450 family. Heme serves as cofactor.

It is found in the membrane. Its pathway is secondary metabolite biosynthesis; terpenoid biosynthesis. Functionally, cytochrome P450 monooxygenase; part of the gene cluster B that mediates the biosynthesis of the fungal meroterpenoid acetoxydehydroaustin. The first step of the pathway is the synthesis of 3,5-dimethylorsellinic acid by the polyketide synthase ausA. 3,5-dimethylorsellinic acid is then prenylated by the polyprenyl transferase ausN. Further epoxidation by the FAD-dependent monooxygenase ausM and cyclization by the probable terpene cyclase ausL lead to the formation of protoaustinoid A. Protoaustinoid A is then oxidized to spiro-lactone preaustinoid A3 by the combined action of the FAD-binding monooxygenases ausB and ausC, and the dioxygenase ausE. Acid-catalyzed keto-rearrangement and ring contraction of the tetraketide portion of preaustinoid A3 by ausJ lead to the formation of preaustinoid A4. The aldo-keto reductase ausK, with the help of ausH, is involved in the next step by transforming preaustinoid A4 into isoaustinone which is in turn hydroxylated by the P450 monooxygenase ausI to form austinolide. The cytochrome P450 monooxygenase ausG then modifies austinolide to austinol. Austinol is further acetylated to austin by the O-acetyltransferase ausP, which spontaneously changes to dehydroaustin. The cytochrome P450 monooxygenase then converts dehydroaustin is into 7-dehydrodehydroaustin. The hydroxylation catalyzed by ausR permits the second O-acetyltransferase ausQ to add an additional acetyl group to the molecule, leading to the formation of acetoxydehydroaustin. Due to genetic rearrangements of the clusters and the subsequent loss of some enzymes, the end product of the Penicillium brasilianum austinoid biosynthesis clusters is acetoxydehydroaustin. The polypeptide is Cytochrome P450 monooxygenase ausR (Penicillium brasilianum).